Here is a 247-residue protein sequence, read N- to C-terminus: MAVRAQFENSNEVGVFATLTNSYAIVAIGGSENFYSVFEAELQDVIPICHASIGGTRIVGRLTAGNRKGLLVPTSTTDQELQHLRNSIPDSVKIQRVEERLSALGNVICCNDHVALIHPDLERETEEIIADVLGVEVFRQTVADNVLTGSYMALSNQGGIVHPKTSIRDQDELSSLLQVPLVAGSVNRGSPVVGAGMVVNDWLAVTGLDTTATELSVMESVFRLGEMGAKGLGMGNANKESIVESFY.

Residues serine 174 and serine 175 each carry the phosphoserine; by CK1 modification.

The protein belongs to the eIF-6 family. Monomer. Associates with the 60S ribosomal subunit. Post-translationally, phosphorylation at Ser-174 and Ser-175 promotes nuclear export.

The protein localises to the cytoplasm. It localises to the nucleus. Its subcellular location is the nucleolus. Its function is as follows. Binds to the 60S ribosomal subunit and prevents its association with the 40S ribosomal subunit to form the 80S initiation complex in the cytoplasm. Is also involved in ribosome biogenesis. Associates with pre-60S subunits in the nucleus and is involved in its nuclear export. This chain is Eukaryotic translation initiation factor 6 (tif6), found in Talaromyces stipitatus (strain ATCC 10500 / CBS 375.48 / QM 6759 / NRRL 1006) (Penicillium stipitatum).